We begin with the raw amino-acid sequence, 466 residues long: ATP synthase subunit beta (466 aa).

155–162 (GGAGVGKT) is an ATP binding site.

This sequence belongs to the ATPase alpha/beta chains family. F-type ATPases have 2 components, CF(1) - the catalytic core - and CF(0) - the membrane proton channel. CF(1) has five subunits: alpha(3), beta(3), gamma(1), delta(1), epsilon(1). CF(0) has three main subunits: a(1), b(2) and c(9-12). The alpha and beta chains form an alternating ring which encloses part of the gamma chain. CF(1) is attached to CF(0) by a central stalk formed by the gamma and epsilon chains, while a peripheral stalk is formed by the delta and b chains.

It is found in the cell inner membrane. The catalysed reaction is ATP + H2O + 4 H(+)(in) = ADP + phosphate + 5 H(+)(out). Produces ATP from ADP in the presence of a proton gradient across the membrane. The catalytic sites are hosted primarily by the beta subunits. The chain is ATP synthase subunit beta from Bordetella petrii (strain ATCC BAA-461 / DSM 12804 / CCUG 43448).